Reading from the N-terminus, the 100-residue chain is Large ribosomal subunit protein uL23 (100 aa).

The protein belongs to the universal ribosomal protein uL23 family. Part of the 50S ribosomal subunit. Contacts protein L29, and trigger factor when it is bound to the ribosome.

Functionally, one of the early assembly proteins it binds 23S rRNA. One of the proteins that surrounds the polypeptide exit tunnel on the outside of the ribosome. Forms the main docking site for trigger factor binding to the ribosome. The protein is Large ribosomal subunit protein uL23 of Shewanella frigidimarina (strain NCIMB 400).